The sequence spans 553 residues: ATP synthase F(1) complex subunit alpha, mitochondrial (553 aa).

The transit peptide at 1-43 (MLSVRVAAAVVRALPRRAGLVSRNALGSSFIAARNFHASNTHL) directs the protein to the mitochondrion. Phosphoserine is present on residues S53 and S65. The residue at position 76 (S76) is a Phosphoserine; alternate. An O-linked (GlcNAc) serine; alternate glycan is attached at S76. S106 bears the Phosphoserine mark. K123, K126, and K132 each carry N6-acetyllysine. The residue at position 134 (T134) is a Phosphothreonine. N6-acetyllysine; alternate is present on K161. N6-succinyllysine; alternate is present on K161. S166 is subject to Phosphoserine. N6-acetyllysine; alternate is present on K167. K167 is modified (N6-succinyllysine; alternate). S184 carries the phosphoserine modification. R204 bears the Omega-N-methylarginine mark. 5 residues coordinate ATP: Q215, G217, K218, T219, and S220. Residue T219 coordinates Mg(2+). N6-acetyllysine; alternate is present on residues K230 and K239. 2 positions are modified to N6-succinyllysine; alternate: K230 and K239. Residue K240 is modified to N6-acetyllysine. An N6-acetyllysine; alternate mark is found at K261 and K305. K261 and K305 each carry N6-succinyllysine; alternate. D312 contacts Mg(2+). Residue K427 is modified to N6-acetyllysine; alternate. Residue K427 is modified to N6-succinyllysine; alternate. Residue K434 is modified to N6-acetyllysine. ATP is bound by residues Q473 and Q475. K498, K506, K531, and K539 each carry N6-acetyllysine; alternate. 4 positions are modified to N6-succinyllysine; alternate: K498, K506, K531, and K539. K541 carries the N6-acetyllysine modification.

The protein belongs to the ATPase alpha/beta chains family. As to quaternary structure, homotrimer. Component of the ATP synthase complex composed at least of ATP5F1A/subunit alpha, ATP5F1B/subunit beta, ATP5MC1/subunit c (homooctomer), MT-ATP6/subunit a, MT-ATP8/subunit 8, ATP5ME/subunit e, ATP5MF/subunit f, ATP5MG/subunit g, ATP5MK/subunit k, ATP5MJ/subunit j, ATP5F1C/subunit gamma, ATP5F1D/subunit delta, ATP5F1E/subunit epsilon, ATP5PF/subunit F6, ATP5PB/subunit b, ATP5PD/subunit d, ATP5PO/subunit OSCP. ATP synthase complex consists of a soluble F(1) head domain (subunits alpha(3) and beta(3)) - the catalytic core - and a membrane F(0) domain - the membrane proton channel (subunits c, a, 8, e, f, g, k and j). These two domains are linked by a central stalk (subunits gamma, delta, and epsilon) rotating inside the F1 region and a stationary peripheral stalk (subunits F6, b, d, and OSCP). Interacts with ATPAF2. Interacts with HRG; the interaction occurs on the surface of T-cells and alters the cell morphology when associated with concanavalin (in vitro). Interacts with PLG (angiostatin peptide); the interaction inhibits most of the angiogenic properties of angiostatin. Interacts with BLOC1S1. Interacts with BCL2L1 isoform BCL-X(L); the interaction mediates the association of BCL2L1 isoform BCL-X(L) with the mitochondrial membrane F(1)F(0) ATP synthase and enhances neurons metabolic efficiency. Interacts with CLN5 and PPT1. Interacts with S100A1; this interaction increases F1-ATPase activity. Interacts with ABCB7; this interaction allows the regulation of cellular iron homeostasis and cellular reactive oxygen species (ROS) levels in cardiomyocytes. Post-translationally, acetylated on lysine residues. BLOC1S1 is required for acetylation.

It is found in the mitochondrion inner membrane. The protein localises to the cell membrane. In terms of biological role, subunit alpha, of the mitochondrial membrane ATP synthase complex (F(1)F(0) ATP synthase or Complex V) that produces ATP from ADP in the presence of a proton gradient across the membrane which is generated by electron transport complexes of the respiratory chain. ATP synthase complex consist of a soluble F(1) head domain - the catalytic core - and a membrane F(1) domain - the membrane proton channel. These two domains are linked by a central stalk rotating inside the F(1) region and a stationary peripheral stalk. During catalysis, ATP synthesis in the catalytic domain of F(1) is coupled via a rotary mechanism of the central stalk subunits to proton translocation. In vivo, can only synthesize ATP although its ATP hydrolase activity can be activated artificially in vitro. With the catalytic subunit beta (ATP5F1B), forms the catalytic core in the F(1) domain. Subunit alpha does not bear the catalytic high-affinity ATP-binding sites. The polypeptide is ATP synthase F(1) complex subunit alpha, mitochondrial (Pan troglodytes (Chimpanzee)).